The following is a 444-amino-acid chain: Protein CLP1 homolog (444 aa).

ATP is bound by residues Glu-33, Lys-72, and 140 to 145 (DSGKST).

The protein belongs to the Clp1 family. Clp1 subfamily. Interacts with PCFS4 and SYM5. Forms a complex with cleavage and polyadenylation specificity factor (CPSF) subunits CPSF30, CPSF100, PCFS1, PCFS4, PCFS5, CPSF160 and FY.

The protein resides in the nucleus. Functionally, required for endonucleolytic cleavage during polyadenylation-dependent pre-mRNA 3'-end formation. Functions in gametophyte, embryo and postembryotic development. In Arabidopsis thaliana (Mouse-ear cress), this protein is Protein CLP1 homolog (CLPS3).